The following is a 345-amino-acid chain: Ryncolin-1 (345 aa).

The first 19 residues, 1 to 19, serve as a signal peptide directing secretion; that stretch reads MKPWAAFHLIFLVASSLEG. The interval 48–118 is disordered; that stretch reads ILQSQPGIPG…DKGDKGEDCN (71 aa). The Collagen-like domain maps to 57–114; sequence GIPGVPGTNGSEGLKGDPGPQGPPGIRGPDGIRGEAGPKGDKGDQGDKGDKGDKGDKG. Residues 86–116 are compositionally biased toward basic and acidic residues; the sequence is DGIRGEAGPKGDKGDQGDKGDKGDKGDKGED. The 219-residue stretch at 121–339 folds into the Fibrinogen C-terminal domain; that stretch reads GCLPTEVRNC…YADMKIRPQQ (219 aa). 2 cysteine pairs are disulfide-bonded: cysteine 130/cysteine 158 and cysteine 282/cysteine 295.

This sequence belongs to the ficolin lectin family. Veficolin subfamily. Hydroxylated, possibly at Pro-80. In terms of tissue distribution, expressed by the venom duct.

Its subcellular location is the secreted. In terms of biological role, initiates complement activation and/or interferes in platelet aggregation and/or blood coagulation. This Cerberus rynchops (Dog-faced water snake) protein is Ryncolin-1.